A 742-amino-acid polypeptide reads, in one-letter code: Two-component response regulator-like PRR37 (742 aa).

The Response regulatory domain maps to 63–181 (KVLLVDSDDS…ELKNLWQHVW (119 aa)). A compositionally biased stretch (low complexity) spans 186 to 195 (SSSGSGSESG). 6 disordered regions span residues 186-249 (SSSG…SWTK), 290-346 (PCTS…PLQN), 375-402 (DAQQ…NRDN), 478-570 (MKSN…VQSN), 590-671 (NGGS…GNDM), and 697-742 (NFGK…AADR). The segment covering 236–248 (DNGSGTQAQSSWT) has biased composition (polar residues). Over residues 299-313 (KQKETNDDFKGKDLE) the composition is skewed to basic and acidic residues. The segment covering 318–330 (RNLNTAYQSSPNE) has biased composition (polar residues). Over residues 331 to 341 (RSIKPTDRRNE) the composition is skewed to basic and acidic residues. Over residues 380–390 (ARATNAPNCSS) the composition is skewed to polar residues. Over residues 490 to 502 (GSNGSSNNNDMGS) the composition is skewed to low complexity. Residues 503-512 (TTKNVVTKPS) are compositionally biased toward polar residues. The span at 618–634 (NGSNSGSNNGSNGQNGS) shows a compositional bias: low complexity. The segment covering 656-667 (GPGGGNGSGSGS) has biased composition (gly residues). The CCT domain occupies 682–724 (RVAAVIKFRQKRKERNFGKKVRYQSRKRLAEQRPRVRGQFVRQ). Over residues 697–708 (NFGKKVRYQSRK) the composition is skewed to basic residues. Residues 719–731 (GQFVRQAVQDQQQ) show a composition bias toward low complexity.

This sequence belongs to the ARR-like family.

It localises to the nucleus. Controls photoperiodic flowering response. Seems to be one of the component of the circadian clock. Expression of several members of the ARR-like family is controlled by circadian rhythm. The particular coordinated sequential expression of PRR73, PRR37, PRR95, PRR59 and PPR1 result to circadian waves that may be at the basis of the endogenous circadian clock. The protein is Two-component response regulator-like PRR37 (PRR37) of Oryza sativa subsp. indica (Rice).